The chain runs to 542 residues: CTP synthase (542 aa).

Residues 1–266 (MATNYIFVTG…DDLICQRFRL (266 aa)) form an amidoligase domain region. S14 is a binding site for CTP. Position 14 (S14) interacts with UTP. ATP-binding positions include 15–20 (SLGKGI) and D72. Positions 72 and 140 each coordinate Mg(2+). Residues 147-149 (DIE), 187-192 (KTKPTQ), and K223 each bind CTP. UTP contacts are provided by residues 187–192 (KTKPTQ) and K223. ATP is bound at residue 239–241 (KDV). The Glutamine amidotransferase type-1 domain maps to 291–542 (TIGMVGKYVE…VKAAKENQKK (252 aa)). G352 is an L-glutamine binding site. The active-site Nucleophile; for glutamine hydrolysis is the C379. Residues 380–383 (LGMQ), E403, and R470 each bind L-glutamine. Active-site residues include H515 and E517.

It belongs to the CTP synthase family. In terms of assembly, homotetramer.

It carries out the reaction UTP + L-glutamine + ATP + H2O = CTP + L-glutamate + ADP + phosphate + 2 H(+). The enzyme catalyses L-glutamine + H2O = L-glutamate + NH4(+). The catalysed reaction is UTP + NH4(+) + ATP = CTP + ADP + phosphate + 2 H(+). It functions in the pathway pyrimidine metabolism; CTP biosynthesis via de novo pathway; CTP from UDP: step 2/2. With respect to regulation, allosterically activated by GTP, when glutamine is the substrate; GTP has no effect on the reaction when ammonia is the substrate. The allosteric effector GTP functions by stabilizing the protein conformation that binds the tetrahedral intermediate(s) formed during glutamine hydrolysis. Inhibited by the product CTP, via allosteric rather than competitive inhibition. Catalyzes the ATP-dependent amination of UTP to CTP with either L-glutamine or ammonia as the source of nitrogen. Regulates intracellular CTP levels through interactions with the four ribonucleotide triphosphates. This Mannheimia succiniciproducens (strain KCTC 0769BP / MBEL55E) protein is CTP synthase.